Consider the following 402-residue polypeptide: Arginine deiminase (402 aa).

The active-site Amidino-cysteine intermediate is the cysteine 392.

This sequence belongs to the arginine deiminase family.

It localises to the cytoplasm. The enzyme catalyses L-arginine + H2O = L-citrulline + NH4(+). The protein operates within amino-acid degradation; L-arginine degradation via ADI pathway; carbamoyl phosphate from L-arginine: step 1/2. The protein is Arginine deiminase of Mycolicibacterium gilvum (strain PYR-GCK) (Mycobacterium gilvum (strain PYR-GCK)).